The following is a 501-amino-acid chain: MNQAILQLSEIEKAFPGVKALDKASLNVYPGRVMALMGENGAGKSTLMKVLTGIYSRDAGEIVYQGQSAQFKGPRDSQQAGISIIHQELNLIRELTIAENIFLGREITSAFGRIDWPQMYAEADKLLARLKVKHSSKTLLGQLSLGEQQMVEIAKALSFESKVIIMDEPTDALTDTETEALFSVIRELREQGCGIVYISHRLKEIFEICDDITVLRDGKFIGQCEVVQTDEDGLIEMMVGRKLEEQYPRIDVVHGQTCLEVIGLTGSGVHDVSFTLKRGEILGISGLMGAGRTELMKVIYGALPSERGVINLDNRTINPISPQDGLANGIAYISEDRKGDGLVLGLSVKENMSLCALDKLSKGVQIQHQDEVVAVDDFIQLFNIKTPSREQIIGNLSGGNQQKVAIAKGLMTKPKVLILDEPTRGVDVGAKKEIYQLINKFKAEGMSIILVSSEMPEVLGMSDRILVMHEGRITGEFEAKHADQEKLMACAVGKKVSEEAA.

2 ABC transporter domains span residues 6-242 (LQLS…VGRK) and 253-495 (VHGQ…VGKK). An ATP-binding site is contributed by 38-45 (GENGAGKS).

Belongs to the ABC transporter superfamily. Ribose importer (TC 3.A.1.2.1) family. The complex is composed of an ATP-binding protein (RbsA), two transmembrane proteins (RbsC) and a solute-binding protein (RbsB).

It localises to the cell inner membrane. It carries out the reaction D-ribose(out) + ATP + H2O = D-ribose(in) + ADP + phosphate + H(+). In terms of biological role, part of the ABC transporter complex RbsABC involved in ribose import. Responsible for energy coupling to the transport system. The protein is Ribose import ATP-binding protein RbsA of Vibrio vulnificus (strain CMCP6).